A 235-amino-acid chain; its full sequence is Peroxisomal membrane protein 11C (235 aa).

Residues 1-91 (MSTLETTRAE…LPLVLLGKSK (91 aa)) lie on the Cytoplasmic side of the membrane. The helical transmembrane segment at 92-108 (NALLSTFLFLDQIVWLG) threads the bilayer. Residues 109–206 (RTGIYKDKER…LLQLAPKKVT (98 aa)) are Lumenal-facing. Residues 207-226 (PRVTGAFGFASSLISCYQLL) form a helical membrane-spanning segment. The Cytoplasmic segment spans residues 227–235 (PSHPKSKMV).

The protein belongs to the peroxin-11 family. Homooligomer. Interacts with ARC5 and FIS1B on peroxisomes. Expressed in roots and developing siliques.

The protein localises to the peroxisome membrane. Functionally, involved in peroxisomal proliferation. Promotes peroxisomal duplication, aggregation or elongation without fission. In Arabidopsis thaliana (Mouse-ear cress), this protein is Peroxisomal membrane protein 11C (PEX11C).